The chain runs to 247 residues: uncharacterized protein (247 aa).

The next 2 membrane-spanning stretches (helical) occupy residues 11–31 (LIAP…IYCV) and 39–59 (FIAI…TGLL).

Its subcellular location is the cell membrane. This is an uncharacterized protein from Haemophilus influenzae (strain ATCC 51907 / DSM 11121 / KW20 / Rd).